Here is a 119-residue protein sequence, read N- to C-terminus: Ribonuclease P protein component (119 aa).

It belongs to the RnpA family. As to quaternary structure, consists of a catalytic RNA component (M1 or rnpB) and a protein subunit.

It carries out the reaction Endonucleolytic cleavage of RNA, removing 5'-extranucleotides from tRNA precursor.. Its function is as follows. RNaseP catalyzes the removal of the 5'-leader sequence from pre-tRNA to produce the mature 5'-terminus. It can also cleave other RNA substrates such as 4.5S RNA. The protein component plays an auxiliary but essential role in vivo by binding to the 5'-leader sequence and broadening the substrate specificity of the ribozyme. The chain is Ribonuclease P protein component from Bifidobacterium longum (strain DJO10A).